Reading from the N-terminus, the 112-residue chain is Iron-sulfur cluster assembly protein CyaY (112 aa).

Belongs to the frataxin family.

Involved in iron-sulfur (Fe-S) cluster assembly. May act as a regulator of Fe-S biogenesis. The chain is Iron-sulfur cluster assembly protein CyaY from Janthinobacterium sp. (strain Marseille) (Minibacterium massiliensis).